The primary structure comprises 320 residues: tRNA(Ile)-lysidine synthase (320 aa).

Residue 33-38 (SGGPDS) participates in ATP binding.

Belongs to the tRNA(Ile)-lysidine synthase family.

The protein localises to the cytoplasm. The catalysed reaction is cytidine(34) in tRNA(Ile2) + L-lysine + ATP = lysidine(34) in tRNA(Ile2) + AMP + diphosphate + H(+). Functionally, ligates lysine onto the cytidine present at position 34 of the AUA codon-specific tRNA(Ile) that contains the anticodon CAU, in an ATP-dependent manner. Cytidine is converted to lysidine, thus changing the amino acid specificity of the tRNA from methionine to isoleucine. The sequence is that of tRNA(Ile)-lysidine synthase from Mycolicibacterium paratuberculosis (strain ATCC BAA-968 / K-10) (Mycobacterium paratuberculosis).